Here is a 139-residue protein sequence, read N- to C-terminus: uncharacterized protein (139 aa).

This is an uncharacterized protein from Encephalitozoon cuniculi (strain GB-M1) (Microsporidian parasite).